Here is a 250-residue protein sequence, read N- to C-terminus: Sulfate transporter CysZ (250 aa).

4 helical membrane passes run 27–47, 64–84, 150–170, and 210–230; these read FVVLPLLANIILVGGAMYYLF, FLSWLSYVLWPLLALTILATF, FLLLLIPALGQTLGPIAWFLF, and MLVAFFTSIPIVNLFIVPVAV.

This sequence belongs to the CysZ family.

It localises to the cell inner membrane. High affinity, high specificity proton-dependent sulfate transporter, which mediates sulfate uptake. Provides the sulfur source for the cysteine synthesis pathway. In Vibrio cholerae serotype O1 (strain ATCC 39315 / El Tor Inaba N16961), this protein is Sulfate transporter CysZ.